We begin with the raw amino-acid sequence, 267 residues long: Acyl-[acyl-carrier-protein]--UDP-N-acetylglucosamine O-acyltransferase (267 aa).

The protein belongs to the transferase hexapeptide repeat family. LpxA subfamily. Homotrimer.

The protein resides in the cytoplasm. It catalyses the reaction a (3R)-hydroxyacyl-[ACP] + UDP-N-acetyl-alpha-D-glucosamine = a UDP-3-O-[(3R)-3-hydroxyacyl]-N-acetyl-alpha-D-glucosamine + holo-[ACP]. It functions in the pathway glycolipid biosynthesis; lipid IV(A) biosynthesis; lipid IV(A) from (3R)-3-hydroxytetradecanoyl-[acyl-carrier-protein] and UDP-N-acetyl-alpha-D-glucosamine: step 1/6. In terms of biological role, involved in the biosynthesis of lipid A, a phosphorylated glycolipid that anchors the lipopolysaccharide to the outer membrane of the cell. The polypeptide is Acyl-[acyl-carrier-protein]--UDP-N-acetylglucosamine O-acyltransferase (Cupriavidus metallidurans (strain ATCC 43123 / DSM 2839 / NBRC 102507 / CH34) (Ralstonia metallidurans)).